A 901-amino-acid chain; its full sequence is Alpha-actinin-3 (901 aa).

Met-1 bears the N-acetylmethionine mark. Residues 1–261 are actin-binding; it reads MMMVMQPEGL…IMTYVSCFYH (261 aa). 2 Calponin-homology (CH) domains span residues 45 to 149 and 158 to 264; these read KQQR…LRFA and TSAK…HAFA. Spectrin repeat units lie at residues 288 to 398, 408 to 513, 523 to 634, and 644 to 747; these read KLME…WLLS, HLAE…ALER, RLQL…TLQE, and RLRR…EVEN. 2 consecutive EF-hand domains span residues 760 to 795 and 796 to 831; these read EQLN…MGYD and LGEV…ETAE. Positions 773, 777, 779, 784, 809, and 811 each coordinate Ca(2+).

It belongs to the alpha-actinin family. As to quaternary structure, homodimer; antiparallel. Also forms heterodimers with ACTN2. Interacts with MYOZ1. As to expression, expression restricted to fast (type 2) skeletal muscle fibers (at protein level).

F-actin cross-linking protein which is thought to anchor actin to a variety of intracellular structures. This is a bundling protein. The chain is Alpha-actinin-3 (ACTN3) from Homo sapiens (Human).